The chain runs to 229 residues: Phosphoglycolate phosphatase (229 aa).

Asp-18 serves as the catalytic Nucleophile. The Mg(2+) site is built by Asp-18, Asp-20, and Asp-176.

The protein belongs to the HAD-like hydrolase superfamily. CbbY/CbbZ/Gph/YieH family. Mg(2+) is required as a cofactor.

The enzyme catalyses 2-phosphoglycolate + H2O = glycolate + phosphate. It functions in the pathway organic acid metabolism; glycolate biosynthesis; glycolate from 2-phosphoglycolate: step 1/1. Specifically catalyzes the dephosphorylation of 2-phosphoglycolate. Is involved in the dissimilation of the intracellular 2-phosphoglycolate formed during the DNA repair of 3'-phosphoglycolate ends, a major class of DNA lesions induced by oxidative stress. The protein is Phosphoglycolate phosphatase of Xylella fastidiosa (strain Temecula1 / ATCC 700964).